The following is a 95-amino-acid chain: Large ribosomal subunit protein eL37x (95 aa).

Zn(2+) is bound by residues Cys19, Cys22, Cys34, and Cys37. The segment at 19 to 37 (CVRCGRRSFHIQKSRCSAC) adopts a C4-type zinc-finger fold. The tract at residues 73–95 (RFKTGFREGTEAKPRSKASASSA) is disordered. Over residues 77 to 86 (GFREGTEAKP) the composition is skewed to basic and acidic residues.

Belongs to the eukaryotic ribosomal protein eL37 family. It depends on Zn(2+) as a cofactor.

Its function is as follows. Binds to the 23S rRNA. This Arabidopsis thaliana (Mouse-ear cress) protein is Large ribosomal subunit protein eL37x (RPL37C).